A 1337-amino-acid chain; its full sequence is Nucleoporin POM152 (1337 aa).

A disordered region spans residues M1–E48. Over M1–R110 the chain is Cytoplasmic. The segment at M1–K175 is pore side. A compositionally biased stretch (low complexity) spans G19–N37. Phosphoserine occurs at positions 45 and 60. The helical transmembrane segment at T111–L131 threads the bilayer. Residues K132–N148 lie on the Perinuclear space side of the membrane. A helical membrane pass occupies residues F149–I169. The Cytoplasmic segment spans residues P170 to L172. A helical transmembrane segment spans residues T173–I193. The Perinuclear space segment spans residues S194–N1337. The segment at D196–N1337 is cisternal side. N280 carries N-linked (GlcNAc...) asparagine glycosylation. Repeat copies occupy residues D390–Y413, D626–T650, K732–Y755, K836–F859, E943–Y966, F1058–F1077, E1157–Y1178, and D1253–Y1276. The 8 X 24 AA approximate repeats stretch occupies residues D390–Y1276.

As to quaternary structure, component of the nuclear pore complex (NPC). NPC constitutes the exclusive means of nucleocytoplasmic transport. NPCs allow the passive diffusion of ions and small molecules and the active, nuclear transport receptor-mediated bidirectional transport of macromolecules such as proteins, RNAs, ribonucleoparticles (RNPs), and ribosomal subunits across the nuclear envelope. Due to its 8-fold rotational symmetry, all subunits are present with 8 copies or multiples thereof. Interacts with NUP188. In terms of processing, the N-terminus is blocked. Post-translationally, phosphorylated by CDC28.

The protein resides in the nucleus. The protein localises to the nuclear pore complex. Its subcellular location is the nucleus membrane. Functionally, functions as a component of the nuclear pore complex (NPC). NPC components, collectively referred to as nucleoporins (NUPs), can play the role of both NPC structural components and of docking or interaction partners for transiently associated nuclear transport factors. POM152 is important for the de novo assembly of NPCs. In Saccharomyces cerevisiae (strain ATCC 204508 / S288c) (Baker's yeast), this protein is Nucleoporin POM152 (POM152).